A 43-amino-acid polypeptide reads, in one-letter code: Potassium channel toxin gamma-KTx 3.2 (43 aa).

4 disulfides stabilise this stretch: Cys5–Cys23, Cys11–Cys34, Cys20–Cys39, and Cys24–Cys41.

It belongs to the ergtoxin family. Gamma-KTx 3 subfamily. Expressed by the venom gland.

Its subcellular location is the secreted. Its function is as follows. Blocks Kv11/ERG potassium channels. The protein is Potassium channel toxin gamma-KTx 3.2 of Centruroides elegans (Bark scorpion).